Reading from the N-terminus, the 391-residue chain is Terminal nucleotidyltransferase 5C (391 aa).

It belongs to the TENT family. In terms of assembly, interacts with BCCIP and PABPC1; the interaction has no effect on TENT5C poly(A) polymerase function. Interacts with PLK4; this interaction leads to the TENT5C recruitment into the centrosome.

Its subcellular location is the nucleus. It localises to the cytoplasm. The protein resides in the cytoskeleton. The protein localises to the microtubule organizing center. It is found in the centrosome. It catalyses the reaction RNA(n) + ATP = RNA(n)-3'-adenine ribonucleotide + diphosphate. Functionally, catalyzes the transfer of one adenosine molecule from an ATP to an mRNA poly(A) tail bearing a 3'-OH terminal group and enhances mRNA stability and gene expression. Can also elongate RNA oligos ending with uridine molecule, provided that the sequence is adenosine-rich. Mainly targets mRNAs encoding endoplasmic reticulum-targeted protein. (Microbial infection) Seems to enhance replication of some viruses, including yellow fever virus, in response to type I interferon. The protein is Terminal nucleotidyltransferase 5C of Homo sapiens (Human).